Consider the following 329-residue polypeptide: Tyrosine--tRNA ligase (329 aa).

Tyr31, Tyr157, Gln161, Asp164, and Gln179 together coordinate L-tyrosine. The short motif at 220-224 (KMSKS) is the 'KMSKS' region element. Lys223 is an ATP binding site.

This sequence belongs to the class-I aminoacyl-tRNA synthetase family. TyrS type 4 subfamily. As to quaternary structure, homodimer.

It is found in the cytoplasm. The enzyme catalyses tRNA(Tyr) + L-tyrosine + ATP = L-tyrosyl-tRNA(Tyr) + AMP + diphosphate + H(+). Functionally, catalyzes the attachment of tyrosine to tRNA(Tyr) in a two-step reaction: tyrosine is first activated by ATP to form Tyr-AMP and then transferred to the acceptor end of tRNA(Tyr). The sequence is that of Tyrosine--tRNA ligase from Picrophilus torridus (strain ATCC 700027 / DSM 9790 / JCM 10055 / NBRC 100828 / KAW 2/3).